A 716-amino-acid polypeptide reads, in one-letter code: Inhibitor of nuclear factor kappa-B kinase subunit epsilon (716 aa).

The region spanning 9-315 (WHTDDLLGQG…LQRVVVHVFS (307 aa)) is the Protein kinase domain. 15–23 (LGQGATASV) lines the ATP pocket. Residue lysine 30 forms a Glycyl lysine isopeptide (Lys-Gly) (interchain with G-Cter in ubiquitin) linkage. Lysine 38 contacts ATP. Aspartate 135 acts as the Proton acceptor in catalysis. Position 172 is a phosphoserine; by autocatalysis and IKKB (serine 172). Lysine 231 is covalently cross-linked (Glycyl lysine isopeptide (Lys-Gly) (interchain with G-Cter in SUMO1)). The interval 383–647 (STAIPKGLAF…VQESLSKLLE (265 aa)) is interaction with DDX3X. Lysine 401 is covalently cross-linked (Glycyl lysine isopeptide (Lys-Gly) (interchain with G-Cter in ubiquitin)). Residues 436–457 (QELMFRGLHWVMEVLQATCRRT) are leucine-zipper. Position 501 is a phosphothreonine (threonine 501). At serine 664 the chain carries Phosphoserine.

This sequence belongs to the protein kinase superfamily. Ser/Thr protein kinase family. I-kappa-B kinase subfamily. As to quaternary structure, homodimer. Interacts with MAVS/IPS1. Interacts (via protein kinase domain) with TTLL12 (via N-terminus); the interaction prevents MAVS binding to IKBKE. Interacts with the adapter proteins AZI2/NAP1, TANK and TBKBP1/SINTBAD. Interacts with SIKE1. Interacts with TICAM1/TRIF, IRF3 and RIGI; interactions are disrupted by the interaction between IKBKE and SIKE1. Interacts with TOPORS; induced by DNA damage. Interacts with CYLD. Interacts (when polyubiquitinated) with IKBKB, IKBKG and MYD88. Interacts with IFIH1. Interacts with DDX3X; the interaction may be induced upon virus infection. Interacts with TRIM6 (via SPRY box). Interacts with unanchored K48-linked polyubiquitin chains; this leads to IKBKE activation. Interacts with TBK1. Interacts with FKBP5. In terms of assembly, (Microbial infection) Interacts (via Protein kinase domain) with arenavirus protein N; the interaction inhibits IKBKE kinase function. (Microbial infection) Interacts with Ebola virus protein VP35; the interaction leads to inhibition of cellular antiviral response by blocking necessary interactions between the IKBKE and MAVS/IPS as well as its substrates IRF3 and IRF7. As to quaternary structure, (Microbial infection) Interacts with Severe fever with thrombocytopenia virus (SFTSV) NSs; this interaction this interaction sequesters IKBKE in NSs-induced cytoplasmic inclusion bodies thereby inhibiting the IFN responses. In terms of assembly, (Microbial infection) Interacts with human T-cell leukemia virus 1/HTLV-1 protein HBZ. (Microbial infection) Interacts with Epstein-Barr virus (EBV) protein NEC2/BFRF1; this interaction inhibits IKBKE kinase activity and IRF3 nuclear translocation. Autophosphorylated and phosphorylated by IKBKB/IKKB. Phosphorylation at Ser-172 is enhanced by the interaction with DDX3X. Phosphorylated at Thr-501 upon IFN activation. In terms of processing, sumoylation by TOPORS upon DNA damage is required for protection of cells against DNA damage-induced cell death. Desumoylated by SENP1. Post-translationally, 'Lys-63'-linked polyubiquitinated at Lys-30 and Lys-401 by TRAF2:BIRC2 and TRAF2:BIRC3 complexes. Ubiquitination is induced by LPS, TNFA and interleukin-1 and required for full kinase activity and KF-kappa-B pathway activation. As to expression, highly expressed in spleen followed by thymus, peripheral blood leukocytes, pancreas, placenta. Weakly expressed in lung, kidney, prostate, ovary and colon.

The protein resides in the cytoplasm. Its subcellular location is the nucleus. It is found in the PML body. It catalyses the reaction L-seryl-[I-kappa-B protein] + ATP = O-phospho-L-seryl-[I-kappa-B protein] + ADP + H(+). Functionally, serine/threonine kinase that plays an essential role in regulating inflammatory responses to viral infection, through the activation of the type I IFN, NF-kappa-B and STAT signaling. Also involved in TNFA and inflammatory cytokines, like Interleukin-1, signaling. Following activation of viral RNA sensors, such as RIG-I-like receptors, associates with DDX3X and phosphorylates interferon regulatory factors (IRFs), IRF3 and IRF7, as well as DDX3X. This activity allows subsequent homodimerization and nuclear translocation of the IRF3 leading to transcriptional activation of pro-inflammatory and antiviral genes including IFNB. In order to establish such an antiviral state, IKBKE forms several different complexes whose composition depends on the type of cell and cellular stimuli. Thus, several scaffolding molecules including IPS1/MAVS, TANK, AZI2/NAP1 or TBKBP1/SINTBAD can be recruited to the IKBKE-containing-complexes. Activated by polyubiquitination in response to TNFA and interleukin-1, regulates the NF-kappa-B signaling pathway through, at least, the phosphorylation of CYLD. Phosphorylates inhibitors of NF-kappa-B thus leading to the dissociation of the inhibitor/NF-kappa-B complex and ultimately the degradation of the inhibitor. In addition, is also required for the induction of a subset of ISGs which displays antiviral activity, may be through the phosphorylation of STAT1 at 'Ser-708'. Phosphorylation of STAT1 at 'Ser-708' also seems to promote the assembly and DNA binding of ISGF3 (STAT1:STAT2:IRF9) complexes compared to GAF (STAT1:STAT1) complexes, in this way regulating the balance between type I and type II IFN responses. Protects cells against DNA damage-induced cell death. Also plays an important role in energy balance regulation by sustaining a state of chronic, low-grade inflammation in obesity, wich leads to a negative impact on insulin sensitivity. Phosphorylates AKT1. The sequence is that of Inhibitor of nuclear factor kappa-B kinase subunit epsilon (IKBKE) from Homo sapiens (Human).